The following is a 62-amino-acid chain: Sec-independent protein translocase protein TatAc (62 aa).

The helical transmembrane segment at 8–28 threads the bilayer; the sequence is ILVILFVGFLVFGPDKLPALG.

This sequence belongs to the TatA/E family. As to quaternary structure, forms a complex with TatC.

It is found in the cell membrane. Functionally, part of the twin-arginine translocation (Tat) system that transports large folded proteins containing a characteristic twin-arginine motif in their signal peptide across membranes. TatA could form the protein-conducting channel of the Tat system. The polypeptide is Sec-independent protein translocase protein TatAc (Bacillus subtilis (strain 168)).